A 494-amino-acid chain; its full sequence is Neuronal acetylcholine receptor subunit alpha-6 (494 aa).

Residues M1–F25 form the signal peptide. Residues K26 to L239 are Extracellular-facing. N-linked (GlcNAc...) asparagine glycosylation is found at N54 and N171. Cystine bridges form between C158–C172 and C222–C223. A run of 3 helical transmembrane segments spans residues P240–L264, V272–T290, and Y306–I327. Residues H328–R465 are Cytoplasmic-facing. At S401 the chain carries Phosphoserine. Residues V466–L484 traverse the membrane as a helical segment.

The protein belongs to the ligand-gated ion channel (TC 1.A.9) family. Acetylcholine receptor (TC 1.A.9.1) subfamily. Alpha-6/CHRNA6 sub-subfamily. In terms of assembly, neuronal AChR is composed of two different types of subunits: alpha and non-alpha (beta). CHRNA6/alpha-6 subunit can be combined to CHRNB2/beta-2, CHRNA4/alpha-4 and CHRNB3/beta-3 to give rise to functional receptors. Heteropentamers containing CHRNB3 have an stoichiometry of (CHRNA6:CHRNB2)2:CHRNB3. Interacts with LYPD6.

It localises to the synaptic cell membrane. It carries out the reaction Ca(2+)(in) = Ca(2+)(out). The enzyme catalyses K(+)(in) = K(+)(out). The catalysed reaction is Na(+)(in) = Na(+)(out). Its activity is regulated as follows. Activated by a myriad of ligands such as acetylcholine, cytisine and nicotine. CHRNA6 nAChR activity is inhibited by the antagonists alpha-conotoxin MII and PIA, a small disulfide-constrained peptides from cone snails. In terms of biological role, component of neuronal acetylcholine receptors (nAChRs) that function as pentameric, ligand-gated cation channels with high calcium permeability among other activities. nAChRs are excitatory neurotrasnmitter receptors formed by a collection of nAChR subunits known to mediate synaptic transmission in the nervous system and the neuromuscular junction. Each nAchR subunit confers differential attributes to channel properties, including activation, deactivation and desensitization kinetics, pH sensitivity, cation permeability, and binding to allosteric modulators. CHRNA6 forms pentameric channels with CHRNB2, CHRNB3 and CHRNA4 that exhibit high sensitivity to ACh and nicotine and are predominantly expressed in only a few brain areas, including dopaminergic neurons, norepirephrine neurons and cells of the visual system. nAChrs containing CHRNA6 subunits mediate endogenous cholinergic modulation of dopamine and gamma-aminobutyric acid (GABA) release in response to nicotine at nerve terminals. In Pan troglodytes (Chimpanzee), this protein is Neuronal acetylcholine receptor subunit alpha-6 (CHRNA6).